Consider the following 432-residue polypeptide: Asparagine--tRNA ligase (432 aa).

Belongs to the class-II aminoacyl-tRNA synthetase family. Homodimer.

It is found in the cytoplasm. The enzyme catalyses tRNA(Asn) + L-asparagine + ATP = L-asparaginyl-tRNA(Asn) + AMP + diphosphate + H(+). This chain is Asparagine--tRNA ligase, found in Limosilactobacillus reuteri (strain DSM 20016) (Lactobacillus reuteri).